The primary structure comprises 149 residues: MNKTYLPSTTSLEPKWYVVDATEQHLGRLATQIAMILRGKTKPIYTPSMDTGDFVIVVNAEKVAVTGKKRTQKIYRRHSGRPGGMKTETFAKLQSRLPERIIEHAVKGMLPKNTLGRNLFTKLKVYAGPDHPHQAQKPEVLTLKTIAGA.

This sequence belongs to the universal ribosomal protein uL13 family. Part of the 50S ribosomal subunit.

Functionally, this protein is one of the early assembly proteins of the 50S ribosomal subunit, although it is not seen to bind rRNA by itself. It is important during the early stages of 50S assembly. This chain is Large ribosomal subunit protein uL13, found in Cyanothece sp. (strain PCC 7425 / ATCC 29141).